The sequence spans 120 residues: UPF0231 protein KPN78578_01240 (120 aa).

It belongs to the UPF0231 family.

This is UPF0231 protein KPN78578_01240 from Klebsiella pneumoniae subsp. pneumoniae (strain ATCC 700721 / MGH 78578).